Here is a 338-residue protein sequence, read N- to C-terminus: Putative peptide import ATP-binding protein BMEII0863 (338 aa).

In terms of domain architecture, ABC transporter spans 10–263 (KGLRTVFRTR…PRHPYTMGLL (254 aa)). 43–50 (GESGSGKS) lines the ATP pocket.

This sequence belongs to the ABC transporter superfamily. In terms of assembly, the complex is composed of two ATP-binding proteins (BMEII0863 and BMEII0864), two transmembrane proteins (BMEII0860 and BMEII0861) and a solute-binding protein (BMEII0859).

Its subcellular location is the cell inner membrane. In terms of biological role, probably part of an ABC transporter complex that could be involved in peptide import. Probably responsible for energy coupling to the transport system. The chain is Putative peptide import ATP-binding protein BMEII0863 from Brucella melitensis biotype 1 (strain ATCC 23456 / CCUG 17765 / NCTC 10094 / 16M).